A 394-amino-acid chain; its full sequence is Phosphoglycerate kinase (394 aa).

Residues 21–23, Arg-36, 59–62, Arg-118, and Arg-151 contribute to the substrate site; these read DFN and HLGR. A Phosphoserine modification is found at Ser-183. Positions 201 and 292 each coordinate ATP. Residue Thr-299 is modified to Phosphothreonine. ATP is bound by residues Glu-323 and 350 to 353; that span reads GGDS.

This sequence belongs to the phosphoglycerate kinase family. As to quaternary structure, monomer.

The protein localises to the cytoplasm. The enzyme catalyses (2R)-3-phosphoglycerate + ATP = (2R)-3-phospho-glyceroyl phosphate + ADP. It functions in the pathway carbohydrate degradation; glycolysis; pyruvate from D-glyceraldehyde 3-phosphate: step 2/5. The polypeptide is Phosphoglycerate kinase (Bacillus cereus (strain ATCC 10987 / NRS 248)).